The following is a 304-amino-acid chain: Glutaminase (304 aa).

Substrate is bound by residues S61, N113, E158, N165, Y189, Y240, and V258.

The protein belongs to the glutaminase family. In terms of assembly, homotetramer.

It carries out the reaction L-glutamine + H2O = L-glutamate + NH4(+). The polypeptide is Glutaminase (Fusobacterium nucleatum subsp. nucleatum (strain ATCC 25586 / DSM 15643 / BCRC 10681 / CIP 101130 / JCM 8532 / KCTC 2640 / LMG 13131 / VPI 4355)).